The chain runs to 177 residues: Ecotin (177 aa).

An N-terminal signal peptide occupies residues Met1–Glu23. Cys83 and Cys122 form a disulfide bridge.

It belongs to the protease inhibitor I11 (ecotin) family. Homodimer.

It is found in the periplasm. In terms of biological role, general inhibitor of family S1 serine proteases. This chain is Ecotin, found in Prochlorococcus marinus (strain MIT 9313).